The following is a 239-amino-acid chain: MKAVMLLSGGIDSSTLLYYLLDGGYEVHALTFFYGQKHSKEIESAEKVAKAAKVRHLKVDISTIHDLISYGALTGEEEVPKAFYSEEVQRRTIVPNRNMILLSIAAGYAVKIGAKEVHYAAHLSDYSIYPDCRKEFVKALDTAVYLANIWTPVEVRAPFVDMTKADIVRLGLKLGVPYELTWSCYEGGDRPCLSCGTCLERTEAFLANGVKDPLLSDEEWKNAVKIYEEMRARNEGKSD.

Leu-7–Leu-17 provides a ligand contact to ATP. The Zn(2+) site is built by Cys-184, Cys-192, Cys-195, and Cys-198.

It belongs to the QueC family. Requires Zn(2+) as cofactor.

It carries out the reaction 7-carboxy-7-deazaguanine + NH4(+) + ATP = 7-cyano-7-deazaguanine + ADP + phosphate + H2O + H(+). Its pathway is purine metabolism; 7-cyano-7-deazaguanine biosynthesis. Catalyzes the ATP-dependent conversion of 7-carboxy-7-deazaguanine (CDG) to 7-cyano-7-deazaguanine (preQ(0)). The protein is 7-cyano-7-deazaguanine synthase of Archaeoglobus fulgidus (strain ATCC 49558 / DSM 4304 / JCM 9628 / NBRC 100126 / VC-16).